Here is a 199-residue protein sequence, read N- to C-terminus: Glycerol-3-phosphate acyltransferase (199 aa).

5 helical membrane passes run 3 to 23, 50 to 70, 78 to 98, 113 to 133, and 154 to 174; these read AAVWTLLLAYLFGSVPAGVLV, WGPALVVAFFDVFKGGIAVLV, DWMLGGVALMAVLGHNYSVFL, LLFLDPVLALWTFPIGLSVIL, and LALGRPLWEVATVFLMALLIF.

Belongs to the PlsY family. In terms of assembly, probably interacts with PlsX.

The protein resides in the cell inner membrane. The catalysed reaction is an acyl phosphate + sn-glycerol 3-phosphate = a 1-acyl-sn-glycero-3-phosphate + phosphate. It participates in lipid metabolism; phospholipid metabolism. In terms of biological role, catalyzes the transfer of an acyl group from acyl-phosphate (acyl-PO(4)) to glycerol-3-phosphate (G3P) to form lysophosphatidic acid (LPA). This enzyme utilizes acyl-phosphate as fatty acyl donor, but not acyl-CoA or acyl-ACP. The chain is Glycerol-3-phosphate acyltransferase from Thermus thermophilus (strain ATCC 27634 / DSM 579 / HB8).